A 31-amino-acid chain; its full sequence is Photosystem II reaction center protein M (31 aa).

The chain crosses the membrane as a helical span at residues 5–25; it reads ILAFIATALLILVPTAFLLII.

Belongs to the PsbM family. PSII is composed of 1 copy each of membrane proteins PsbA, PsbB, PsbC, PsbD, PsbE, PsbF, PsbH, PsbI, PsbJ, PsbK, PsbL, PsbM, PsbT, PsbX, PsbY, PsbZ, Psb30/Ycf12, at least 3 peripheral proteins of the oxygen-evolving complex and a large number of cofactors. It forms dimeric complexes.

The protein localises to the plastid membrane. Functionally, one of the components of the core complex of photosystem II (PSII). PSII is a light-driven water:plastoquinone oxidoreductase that uses light energy to abstract electrons from H(2)O, generating O(2) and a proton gradient subsequently used for ATP formation. It consists of a core antenna complex that captures photons, and an electron transfer chain that converts photonic excitation into a charge separation. This subunit is found at the monomer-monomer interface. The chain is Photosystem II reaction center protein M from Cuscuta exaltata (Tall dodder).